The sequence spans 284 residues: 4-hydroxybenzoate octaprenyltransferase (284 aa).

The next 8 membrane-spanning stretches (helical) occupy residues 14-34 (VHQP…LWIT), 41-61 (FIVL…GCVI), 93-113 (WVFF…NNII), 134-154 (YIYL…LIVY), 166-186 (WLLF…YAMV), 209-229 (IVIG…GIVE), 233-253 (IIFY…QQVL), and 262-282 (CLWA…GIVL).

Belongs to the UbiA prenyltransferase family. Requires Mg(2+) as cofactor.

The protein localises to the cell inner membrane. The catalysed reaction is all-trans-octaprenyl diphosphate + 4-hydroxybenzoate = 4-hydroxy-3-(all-trans-octaprenyl)benzoate + diphosphate. The protein operates within cofactor biosynthesis; ubiquinone biosynthesis. Catalyzes the prenylation of para-hydroxybenzoate (PHB) with an all-trans polyprenyl group. Mediates the second step in the final reaction sequence of ubiquinone-8 (UQ-8) biosynthesis, which is the condensation of the polyisoprenoid side chain with PHB, generating the first membrane-bound Q intermediate 3-octaprenyl-4-hydroxybenzoate. In Blochmanniella floridana, this protein is 4-hydroxybenzoate octaprenyltransferase.